Reading from the N-terminus, the 216-residue chain is Inorganic pyrophosphatase (216 aa).

Residues Lys-39, Arg-53, and Tyr-65 each contribute to the substrate site. Mg(2+)-binding residues include Asp-93, Asp-98, and Asp-131. Substrate is bound at residue Tyr-168.

Belongs to the PPase family. In terms of assembly, homohexamer. The cofactor is Mg(2+).

Its subcellular location is the cytoplasm. It carries out the reaction diphosphate + H2O = 2 phosphate + H(+). Functionally, catalyzes the hydrolysis of inorganic pyrophosphate (PPi) forming two phosphate ions. This Chlamydia caviae (strain ATCC VR-813 / DSM 19441 / 03DC25 / GPIC) (Chlamydophila caviae) protein is Inorganic pyrophosphatase.